Here is a 208-residue protein sequence, read N- to C-terminus: V-type ATP synthase subunit E (208 aa).

This sequence belongs to the V-ATPase E subunit family.

In terms of biological role, produces ATP from ADP in the presence of a proton gradient across the membrane. This is V-type ATP synthase subunit E from Chlamydia trachomatis serovar A (strain ATCC VR-571B / DSM 19440 / HAR-13).